The primary structure comprises 761 residues: Xaa-Pro dipeptidyl-peptidase (761 aa).

Catalysis depends on charge relay system residues Ser-347, Asp-467, and His-497.

Belongs to the peptidase S15 family. Homodimer.

The protein localises to the cytoplasm. The enzyme catalyses Hydrolyzes Xaa-Pro-|- bonds to release unblocked, N-terminal dipeptides from substrates including Ala-Pro-|-p-nitroanilide and (sequentially) Tyr-Pro-|-Phe-Pro-|-Gly-Pro-|-Ile.. In terms of biological role, removes N-terminal dipeptides sequentially from polypeptides having unsubstituted N-termini provided that the penultimate residue is proline. The sequence is that of Xaa-Pro dipeptidyl-peptidase from Streptococcus agalactiae serotype V (strain ATCC BAA-611 / 2603 V/R).